A 737-amino-acid polypeptide reads, in one-letter code: Elongation factor 2 (737 aa).

The 245-residue stretch at 18 to 262 folds into the tr-type G domain; that stretch reads TRVRNIGIIA…TVIKFVPNPR (245 aa). Residues 27–34, 93–97, and 147–150 each bind GTP; these read AHVDHGKT, DTPGH, and NKVD. His-604 bears the Diphthamide mark.

Belongs to the TRAFAC class translation factor GTPase superfamily. Classic translation factor GTPase family. EF-G/EF-2 subfamily.

It is found in the cytoplasm. Its function is as follows. Catalyzes the GTP-dependent ribosomal translocation step during translation elongation. During this step, the ribosome changes from the pre-translocational (PRE) to the post-translocational (POST) state as the newly formed A-site-bound peptidyl-tRNA and P-site-bound deacylated tRNA move to the P and E sites, respectively. Catalyzes the coordinated movement of the two tRNA molecules, the mRNA and conformational changes in the ribosome. This is Elongation factor 2 (fusA) from Sulfurisphaera tokodaii (strain DSM 16993 / JCM 10545 / NBRC 100140 / 7) (Sulfolobus tokodaii).